We begin with the raw amino-acid sequence, 312 residues long: Aspartate carbamoyltransferase catalytic subunit (312 aa).

Carbamoyl phosphate-binding residues include arginine 55 and threonine 56. Lysine 83 contributes to the L-aspartate binding site. Carbamoyl phosphate-binding residues include arginine 105, histidine 133, and glutamine 136. Residues arginine 166 and arginine 220 each contribute to the L-aspartate site. Positions 261 and 262 each coordinate carbamoyl phosphate.

Belongs to the aspartate/ornithine carbamoyltransferase superfamily. ATCase family. As to quaternary structure, heterododecamer (2C3:3R2) of six catalytic PyrB chains organized as two trimers (C3), and six regulatory PyrI chains organized as three dimers (R2).

The catalysed reaction is carbamoyl phosphate + L-aspartate = N-carbamoyl-L-aspartate + phosphate + H(+). It participates in pyrimidine metabolism; UMP biosynthesis via de novo pathway; (S)-dihydroorotate from bicarbonate: step 2/3. In terms of biological role, catalyzes the condensation of carbamoyl phosphate and aspartate to form carbamoyl aspartate and inorganic phosphate, the committed step in the de novo pyrimidine nucleotide biosynthesis pathway. This Prosthecochloris aestuarii (strain DSM 271 / SK 413) protein is Aspartate carbamoyltransferase catalytic subunit.